The primary structure comprises 432 residues: Peptidyl-prolyl cis-trans isomerase cyp6 (432 aa).

The region spanning 1–168 (MSVLIETTVG…RDIRIKHTII (168 aa)) is the PPIase cyclophilin-type domain. A Phosphoserine modification is found at Ser206. Residues 244–322 (NVLFVCKLNP…SRIHVDFSQS (79 aa)) form the RRM domain. The tract at residues 330–432 (YNSNRDRKRS…DRRYRDDRYR (103 aa)) is disordered. Composition is skewed to basic and acidic residues over residues 341 to 366 (SRSD…DDYR), 373 to 395 (DHRD…DDRS), and 406 to 432 (NCDD…DRYR).

Belongs to the cyclophilin-type PPIase family. PPIL4 subfamily.

It localises to the nucleus. It catalyses the reaction [protein]-peptidylproline (omega=180) = [protein]-peptidylproline (omega=0). PPIases accelerate the folding of proteins. It catalyzes the cis-trans isomerization of proline imidic peptide bonds in oligopeptides. This Schizosaccharomyces pombe (strain 972 / ATCC 24843) (Fission yeast) protein is Peptidyl-prolyl cis-trans isomerase cyp6 (cyp6).